We begin with the raw amino-acid sequence, 364 residues long: Developmentally-regulated GTP-binding protein 2 (364 aa).

Lys-21 carries the post-translational modification (3S)-3-hydroxylysine. An OBG-type G domain is found at 63 to 288; sequence ARVALIGFPS…LLEMLWEYLA (226 aa). GTP-binding positions include 69 to 76, 94 to 98, 115 to 118, 246 to 249, and 269 to 271; these read GFPSVGKS, FTTLT, DLPG, NKID, and SCG. The Mg(2+) site is built by Ser-76 and Thr-96. The region spanning 288 to 363 is the TGS domain; sequence ALTCIYTKKR…EHEDVIQIVK (76 aa).

It belongs to the TRAFAC class OBG-HflX-like GTPase superfamily. OBG GTPase family. Interacts with RWDD1; this interaction confers protection to polyubiquitination and proteolytic degradation. Interacts with JMJD7; this interaction is direct. Requires Mg(2+) as cofactor. Polyubiquitinated. Post-translationally, hydroxylated (with S stereochemistry) at C-3 of Lys-21 by JMJD7.

It localises to the nucleus. Its subcellular location is the cytoplasm. It catalyses the reaction GTP + H2O = GDP + phosphate + H(+). Its function is as follows. Catalyzes the conversion of GTP to GDP through hydrolysis of the gamma-phosphate bond in GTP. When hydroxylated at C-3 of 'Lys-21' by JMJD7, may bind to RNA and play a role in translation. This chain is Developmentally-regulated GTP-binding protein 2 (DRG2), found in Bos taurus (Bovine).